We begin with the raw amino-acid sequence, 716 residues long: VERDPIKTSFEKWAKPGHFSKTLSKGPNTTTWIWNLHADAHDFDSHTDDLEEISRKVFSAHFGQLAIILIWLSGMYFHGARFSNYEAWLSDPTHIKPSAQVVWPIVGQEILNGDVGGGFRGIQITSGFFQLWRASGITSELQLYCTAIGGLIFAGLMLFAGWFHYHKAAPKLAWFQDVESMLNHHLAGLLGLGSLSWAGHQVHVSLPINQLLDAGVDPKEIPLPHEFILNRDLLAQLYPSFAKGLTPFFTLNWSEYSDFLTFRGGLNPVTGGLWLTDTVHHHLAIAILFLIAGHMYRTNWSIGHSLKEILEAHKGPFTGEGHKGLYEILTTSWHAQLALNLAMLGSLTIVVAHHMYSMPPYPYLAIDYGTQLSLFTHHMWIGGFLIVGAAAHAAIFMVRDYDPTTQYNNLLDRVLRHRDAIISHLNWVCIFLGFHSFGLYIHNDTMSALGRPQDMFSDTAIQLQPIFAQWIQNTHASAPSLTAPDATASTSLTWGGGDLVAVGNKVALLPIPLGTADFLVHHIHAFTIHVTVLILLKGVLFARSSRLIPDKANLGFRFPCDGPGRGGTCQVSAWDHVFLGLFWMYNAISVVIFHFSWKMQSDVWGSISDQGVVTHITGGNFAQSSITINGWLRDFLWAQASQVIQSYGSSLSAYGLLFLGAHFVWAFSLMFLFSGRGYWQELIESIVWAHNKLKVAPAIQPRALSIVQGRAVGVAH.

The next 8 helical transmembrane spans lie at 57–80, 143–166, 182–206, 278–296, 333–356, 372–398, 420–442, and 518–536; these read VFSAHFGQLAIILIWLSGMYFHGA, LYCTAIGGLIFAGLMLFAGWFHYH, LNHHLAGLLGLGSLSWAGHQVHVSL, TVHHHLAIAILFLIAGHMY, WHAQLALNLAMLGSLTIVVAHHMY, LSLFTHHMWIGGFLIVGAAAHAAIFMV, AIISHLNWVCIFLGFHSFGLYIH, and FLVHHIHAFTIHVTVLILL. Positions 560 and 569 each coordinate [4Fe-4S] cluster. A run of 2 helical transmembrane segments spans residues 576-597 and 651-673; these read HVFLGLFWMYNAISVVIFHFSW and LSAYGLLFLGAHFVWAFSLMFLF. His-662 serves as a coordination point for chlorophyll a'. Met-670 and Tyr-678 together coordinate chlorophyll a. Trp-679 lines the phylloquinone pocket. Residues 711–716 form a helical membrane-spanning segment; it reads AVGVAH.

The protein belongs to the PsaA/PsaB family. In terms of assembly, the PsaA/B heterodimer binds the P700 chlorophyll special pair and subsequent electron acceptors. PSI consists of a core antenna complex that captures photons, and an electron transfer chain that converts photonic excitation into a charge separation. The eukaryotic PSI reaction center is composed of at least 11 subunits. P700 is a chlorophyll a/chlorophyll a' dimer, A0 is one or more chlorophyll a, A1 is one or both phylloquinones and FX is a shared 4Fe-4S iron-sulfur center. serves as cofactor.

The protein resides in the plastid. Its subcellular location is the chloroplast thylakoid membrane. It carries out the reaction reduced [plastocyanin] + hnu + oxidized [2Fe-2S]-[ferredoxin] = oxidized [plastocyanin] + reduced [2Fe-2S]-[ferredoxin]. Functionally, psaA and PsaB bind P700, the primary electron donor of photosystem I (PSI), as well as the electron acceptors A0, A1 and FX. PSI is a plastocyanin-ferredoxin oxidoreductase, converting photonic excitation into a charge separation, which transfers an electron from the donor P700 chlorophyll pair to the spectroscopically characterized acceptors A0, A1, FX, FA and FB in turn. Oxidized P700 is reduced on the lumenal side of the thylakoid membrane by plastocyanin. The chain is Photosystem I P700 chlorophyll a apoprotein A1 from Araucaria araucana (Monkey-puzzle tree).